The sequence spans 478 residues: Sodium-dependent phosphate transport protein 3 (478 aa).

Asparagine 28, asparagine 47, asparagine 56, and asparagine 69 each carry an N-linked (GlcNAc...) asparagine glycan. A run of 10 helical transmembrane segments spans residues 98–118, 130–150, 183–203, 211–231, 273–293, 317–337, 341–361, 363–383, 405–425, and 442–462; these read ISYG…IFGA, SLLT…VIVI, SIAG…GGLI, FIFY…FTVI, LPLW…TIII, LPFI…DFLL, LLSL…LPSL, AVAL…LILI, YASF…IISS, and NVFF…LIFG.

The protein belongs to the major facilitator superfamily. Sodium/anion cotransporter family. In terms of tissue distribution, expressed in the liver, kidney, placenta, lung and thyroid (at protein level).

It is found in the apical cell membrane. The catalysed reaction is 3 Na(+)(out) + phosphate(out) = 3 Na(+)(in) + phosphate(in). It carries out the reaction urate(out) + n chloride(in) = urate(in) + n chloride(out). Its function is as follows. Acts as a membrane potential-dependent organic anion transporter, the transport requires a low concentration of chloride ions. Mediates chloride-dependent transport of urate. Can actively transport inorganic phosphate into cells via Na(+) cotransport. The protein is Sodium-dependent phosphate transport protein 3 (Slc17a2) of Mus musculus (Mouse).